We begin with the raw amino-acid sequence, 324 residues long: Ribosomal RNA small subunit methyltransferase H (324 aa).

Residues 47 to 49, Asp-67, Leu-96, Asp-115, and Gln-122 contribute to the S-adenosyl-L-methionine site; that span reads GGH.

It belongs to the methyltransferase superfamily. RsmH family.

The protein localises to the cytoplasm. It carries out the reaction cytidine(1402) in 16S rRNA + S-adenosyl-L-methionine = N(4)-methylcytidine(1402) in 16S rRNA + S-adenosyl-L-homocysteine + H(+). Specifically methylates the N4 position of cytidine in position 1402 (C1402) of 16S rRNA. This is Ribosomal RNA small subunit methyltransferase H from Halorhodospira halophila (strain DSM 244 / SL1) (Ectothiorhodospira halophila (strain DSM 244 / SL1)).